The chain runs to 336 residues: Phospho-N-acetylmuramoyl-pentapeptide-transferase (336 aa).

10 helical membrane passes run 3 to 23, 53 to 73, 78 to 98, 118 to 138, 143 to 163, 174 to 194, 200 to 220, 226 to 246, 251 to 271, and 316 to 336; these read LTLIAAIISFMVSAFTMPYFI, GGTVFLLVATAVSLLVSLFSI, SLALISGILSIVVIYGIIGFL, LALQLAGGLMFYFLHVSPSGI, VFGYQLPLGIFYLFFVLFWVV, GIDGLASISVVISLVTYGVIA, FDVLLLIGAMIGALLGFFCFN, VFMGDVGSLALGAMLAAISIA, WTLLIIGIVYVLETSSVMLQV, and AFLWGVGSLASLLVLAILYVF.

This sequence belongs to the glycosyltransferase 4 family. MraY subfamily. Requires Mg(2+) as cofactor.

Its subcellular location is the cell membrane. It carries out the reaction UDP-N-acetyl-alpha-D-muramoyl-L-alanyl-gamma-D-glutamyl-L-lysyl-D-alanyl-D-alanine + di-trans,octa-cis-undecaprenyl phosphate = Mur2Ac(oyl-L-Ala-gamma-D-Glu-L-Lys-D-Ala-D-Ala)-di-trans,octa-cis-undecaprenyl diphosphate + UMP. Its pathway is cell wall biogenesis; peptidoglycan biosynthesis. In terms of biological role, catalyzes the initial step of the lipid cycle reactions in the biosynthesis of the cell wall peptidoglycan: transfers peptidoglycan precursor phospho-MurNAc-pentapeptide from UDP-MurNAc-pentapeptide onto the lipid carrier undecaprenyl phosphate, yielding undecaprenyl-pyrophosphoryl-MurNAc-pentapeptide, known as lipid I. This chain is Phospho-N-acetylmuramoyl-pentapeptide-transferase, found in Streptococcus pyogenes serotype M49 (strain NZ131).